Consider the following 474-residue polypeptide: Dihydrolipoyl dehydrogenase (474 aa).

Residues 34–51, lysine 60, and glycine 124 contribute to the FAD site; that span reads EGNPYDDPKGEARLGGTC. Residues cysteine 51 and cysteine 56 are joined by a disulfide bond. NAD(+)-binding positions include 189–193, glutamate 212, valine 246, and 278–281; these read GAGVI and SVGR. Residues aspartate 321 and alanine 329 each contribute to the FAD site. The active-site Proton acceptor is histidine 453.

This sequence belongs to the class-I pyridine nucleotide-disulfide oxidoreductase family. FAD serves as cofactor.

The protein resides in the cytoplasm. It catalyses the reaction N(6)-[(R)-dihydrolipoyl]-L-lysyl-[protein] + NAD(+) = N(6)-[(R)-lipoyl]-L-lysyl-[protein] + NADH + H(+). The branched-chain alpha-keto dehydrogenase complex catalyzes the overall conversion of alpha-keto acids to acyl-CoA and CO(2). It contains multiple copies of 3 enzymatic components: branched-chain alpha-keto acid decarboxylase (E1), lipoamide acyltransferase (E2) and lipoamide dehydrogenase (E3). In Cupriavidus necator (strain ATCC 17699 / DSM 428 / KCTC 22496 / NCIMB 10442 / H16 / Stanier 337) (Ralstonia eutropha), this protein is Dihydrolipoyl dehydrogenase (odhL).